Here is a 652-residue protein sequence, read N- to C-terminus: 2-oxoglutarate carboxylase large subunit (652 aa).

The Pyruvate carboxyltransferase domain maps to Ile26–Asp288. Substrate contacts are provided by residues Arg34–Gln38 and Arg105. Asp35 contacts a divalent metal cation. The a divalent metal cation site is built by Lys196, His227, and His229. An N6-carboxylysine modification is found at Lys196. Residue Thr362 coordinates substrate. In terms of domain architecture, Biotinyl-binding spans Ala563–Lys643. The residue at position 609 (Lys609) is an N6-biotinyllysine.

As to quaternary structure, heterohexadecamer of 8 large subunits and 8 small subunits. The cofactor is Mg(2+). Requires Mn(2+) as cofactor. Co(2+) serves as cofactor. Biotinylated.

The enzyme catalyses hydrogencarbonate + 2-oxoglutarate + ATP = (S)-oxalosuccinate + ADP + phosphate + H(+). This Hydrogenobacter thermophilus (strain DSM 6534 / IAM 12695 / TK-6) protein is 2-oxoglutarate carboxylase large subunit.